The chain runs to 257 residues: Zinc transporter ZupT (257 aa).

3 consecutive transmembrane segments (helical) span residues leucine 5 to glycine 25, valine 32 to methionine 52, and glycine 61 to leucine 81. Positions 120 and 123 each coordinate Fe(2+). The Zn(2+) site is built by glutamate 123 and histidine 148. Residues asparagine 149, glutamate 152, and glutamate 181 each contribute to the Fe(2+) site. Glutamate 152 provides a ligand contact to Zn(2+). The next 3 helical transmembrane spans lie at isoleucine 182 to alanine 202, alanine 203 to leucine 223, and glycine 236 to isoleucine 256.

It belongs to the ZIP transporter (TC 2.A.5) family. ZupT subfamily.

The protein resides in the cell inner membrane. The enzyme catalyses Zn(2+)(in) = Zn(2+)(out). Functionally, mediates zinc uptake. May also transport other divalent cations. In Salmonella arizonae (strain ATCC BAA-731 / CDC346-86 / RSK2980), this protein is Zinc transporter ZupT.